The following is a 1340-amino-acid chain: Protein SHORT ROOT IN SALT MEDIUM 1 (1340 aa).

Disordered regions lie at residues 1 to 73 (MHRD…RSHL), 161 to 185 (YGEQ…ADPS), 357 to 473 (EEER…IRRS), 723 to 750 (TVEV…KKTV), 784 to 990 (PETT…PPRA), and 1063 to 1269 (RNQR…KREE). Residues 7–39 (SSRGTGYGQQQYGSQSGYSQNLGSGYPGSSVSG) are compositionally biased toward low complexity. Polar residues predominate over residues 46 to 60 (QISLSSRHPSITGAP). Basic and acidic residues-rich tracts occupy residues 173-182 (LQNEPTRRYA), 357-470 (EEER…EASI), and 723-735 (TVEV…KKSP). Residues 355-426 (LREEERRRED…RERKRALEIK (72 aa)) adopt a coiled-coil conformation. Residues 810-824 (GDTSDPSAKANEQTP) show a composition bias toward polar residues. Over residues 828-840 (IVKKKIIKRVAKR) the composition is skewed to basic residues. Composition is skewed to basic and acidic residues over residues 841 to 872 (KVAE…KKSS), 887 to 988 (EDVK…EEPP), 1069 to 1097 (HQEE…DKEA), and 1105 to 1138 (PGKD…ETLG). A coiled-coil region spans residues 1052-1086 (LKKLRVKIVRQRNQRKRHQEELSVKQNEAKSQDKR). Residues 1153–1204 (ENQDEEDDDGDDDPEEDPEEDPEEDPEEDPEEDPEECEEMDVANTEQEEPAE) are compositionally biased toward acidic residues. 2 stretches are compositionally biased toward basic and acidic residues: residues 1205–1214 (EPQKKEENLE) and 1229–1257 (TDNR…HGKQ). The 36-residue stretch at 1270-1305 (TVDKELLQAFRFFDRNQAGYVRVEDMRVTIHSLGKF) folds into the EF-hand domain.

As to quaternary structure, interacts with BHLH148/RITF1. Expressed ubiquitously at high levels, including in guard cells.

The protein resides in the nucleus. Functionally, required for salt tolerance and sodium (Na) homeostasis after salt stress. Together with BHLH148/RITF1, regulates the transcription of several genes involved in the detoxification of reactive oxygen species (ROS) generated by salt (NaCl) stress. Binds calcium. This is Protein SHORT ROOT IN SALT MEDIUM 1 from Arabidopsis thaliana (Mouse-ear cress).